The sequence spans 277 residues: uncharacterized protein (277 aa).

The SWIM-type zinc finger occupies 139–167 (TARELSLDCSCPDYAVPCKHLAATFYLLA).

This is an uncharacterized protein from Mycobacterium tuberculosis (strain ATCC 25618 / H37Rv).